A 95-amino-acid polypeptide reads, in one-letter code: Aspartyl/glutamyl-tRNA(Asn/Gln) amidotransferase subunit C (95 aa).

It belongs to the GatC family. In terms of assembly, heterotrimer of A, B and C subunits.

It catalyses the reaction L-glutamyl-tRNA(Gln) + L-glutamine + ATP + H2O = L-glutaminyl-tRNA(Gln) + L-glutamate + ADP + phosphate + H(+). It carries out the reaction L-aspartyl-tRNA(Asn) + L-glutamine + ATP + H2O = L-asparaginyl-tRNA(Asn) + L-glutamate + ADP + phosphate + 2 H(+). Functionally, allows the formation of correctly charged Asn-tRNA(Asn) or Gln-tRNA(Gln) through the transamidation of misacylated Asp-tRNA(Asn) or Glu-tRNA(Gln) in organisms which lack either or both of asparaginyl-tRNA or glutaminyl-tRNA synthetases. The reaction takes place in the presence of glutamine and ATP through an activated phospho-Asp-tRNA(Asn) or phospho-Glu-tRNA(Gln). The sequence is that of Aspartyl/glutamyl-tRNA(Asn/Gln) amidotransferase subunit C from Anaeromyxobacter sp. (strain Fw109-5).